The sequence spans 414 residues: Cytochrome b (414 aa).

2 helical membrane passes run 40–60 (FFGSLAILTLVIQIVTGVWLA) and 84–104 (GWLIRYMHSTGASMFFIVIYL). H91 and H105 together coordinate heme b. 8 consecutive transmembrane segments (helical) span residues 121 to 141 (LLWMIGVVIYLVMMATAFFGY), 154 to 174 (QVIVNLFAAVPVVGEDLSVWV), 188 to 208 (FFAFHFLLPFLLAGLVFLHIV), 252 to 272 (LMGVVVFLAIFGYVMFFNPTM), 294 to 314 (IAPVWYFTPFYAMLRAVPPMY), 317 to 337 (QFPGVVVMFAAILILFVLPWL), 351 to 371 (IFKWATGIFVVSFVALAWLGI), and 378 to 398 (YTLLSQIFTVLYFAYFLLMPI). Heme b-binding residues include H192 and H206.

It belongs to the cytochrome b family. As to quaternary structure, the main subunits of complex b-c1 are: cytochrome b, cytochrome c1 and the Rieske protein. Heme b is required as a cofactor.

The protein localises to the cell membrane. Its function is as follows. Component of the ubiquinol-cytochrome c reductase complex (complex III or cytochrome b-c1 complex), which is a respiratory chain that generates an electrochemical potential coupled to ATP synthesis. In Allochromatium vinosum (strain ATCC 17899 / DSM 180 / NBRC 103801 / NCIMB 10441 / D) (Chromatium vinosum), this protein is Cytochrome b (petB).